A 295-amino-acid chain; its full sequence is Indole-3-glycerol phosphate synthase (295 aa).

This sequence belongs to the TrpC family.

The catalysed reaction is 1-(2-carboxyphenylamino)-1-deoxy-D-ribulose 5-phosphate + H(+) = (1S,2R)-1-C-(indol-3-yl)glycerol 3-phosphate + CO2 + H2O. The protein operates within amino-acid biosynthesis; L-tryptophan biosynthesis; L-tryptophan from chorismate: step 4/5. In Prochlorococcus marinus (strain MIT 9301), this protein is Indole-3-glycerol phosphate synthase.